The following is a 501-amino-acid chain: Putative lon protease homolog (501 aa).

Residue 53–60 (GPPGIGKS) participates in ATP binding. Over residues 481–494 (SSSQRMSQHGYSSE) the composition is skewed to polar residues. Positions 481 to 501 (SSSQRMSQHGYSSENIDRSYM) are disordered.

The protein belongs to the peptidase S16 family.

In Methanothermobacter thermautotrophicus (strain ATCC 29096 / DSM 1053 / JCM 10044 / NBRC 100330 / Delta H) (Methanobacterium thermoautotrophicum), this protein is Putative lon protease homolog.